We begin with the raw amino-acid sequence, 323 residues long: Acetyl esterase (323 aa).

The Involved in the stabilization of the negatively charged intermediate by the formation of the oxyanion hole motif lies at 91 to 93 (HGG). Catalysis depends on residues Ser-165, Asp-262, and His-292.

The protein belongs to the 'GDXG' lipolytic enzyme family. In terms of assembly, homodimer. Interacts with MalT and MelA.

The protein resides in the cytoplasm. Functionally, displays esterase activity towards short chain fatty esters (acyl chain length of up to 8 carbons). Able to hydrolyze triacetylglycerol (triacetin) and tributyrylglycerol (tributyrin), but not trioleylglycerol (triolein) or cholesterol oleate. Negatively regulates MalT activity by antagonizing maltotriose binding. Inhibits MelA galactosidase activity. The chain is Acetyl esterase from Salmonella paratyphi A (strain ATCC 9150 / SARB42).